The following is a 640-amino-acid chain: MELTPLIRDKSRLSDFLKDIPNDPGCYLMKDGEDRLLYVGKSKKLRNRVRSYFRSGNELSPRISLMVRQVADIELIVTDNESEALTLESNLIKSHQPYFNVLLKDDKKYPYVCITWGDKYPRIFLTRKRRQRQLKDKYYGPYVDVYLLRQTLFSIKKLFPLRQRRIPLYKDRTCLNYSIGRCPGVCQEEISSEDYKNTLKRVEMIFQGRTDELRILLEKQMISFSESLKFEEAGSVRDQLKGIDRLYESQKMIIPDSSVCRDIIAMASEENISSVQIFQMRSGKLIGRLGYFSDNSNFNSSQILQQVIENHYSNVDPVEIPSEILVQHQLVNNILISDWLSEIKKQKVNINVPKRSRKAEIIKLVEKNANLELQRIKQSQDKNLVELDDLTNILDLENIPKRIECYDISHIQGSDAVASQVVFIDGIAARQHYRRYKIKSPNIKIGHSDDFESMAEVITRRFRRWARFKEEGGDIDALLSNESSVLDNLNLNDWPDLVVIDGGKGQLSSVVAALEGLKLDQNLNVISLAKKKEEVFIPKVKQSLVTESNQPGMLLLRRLRDEAHRFAITFHRQKRSQRMKRSQLNEIPGLGPQRIKLLLEHFRSIEAIQMATFSELSSTPGLGRSTAVVIRNYFHPDKNI.

Residues 22–101 (NDPGCYLMKD…IKSHQPYFNV (80 aa)) form the GIY-YIG domain. The UVR domain maps to 211 to 246 (DELRILLEKQMISFSESLKFEEAGSVRDQLKGIDRL).

The protein belongs to the UvrC family. In terms of assembly, interacts with UvrB in an incision complex.

It localises to the cytoplasm. Functionally, the UvrABC repair system catalyzes the recognition and processing of DNA lesions. UvrC both incises the 5' and 3' sides of the lesion. The N-terminal half is responsible for the 3' incision and the C-terminal half is responsible for the 5' incision. In Prochlorococcus marinus (strain NATL2A), this protein is UvrABC system protein C.